Consider the following 308-residue polypeptide: HPr kinase/phosphorylase (308 aa).

Active-site residues include His138 and Lys159. An ATP-binding site is contributed by 153–160 (GESGLGKS). Residue Ser160 participates in Mg(2+) binding. Asp177 serves as the catalytic Proton acceptor; for phosphorylation activity. Proton donor; for dephosphorylation activity. The segment at 201–210 (LEVRGLGLLD) is important for the catalytic mechanism of both phosphorylation and dephosphorylation. Residue Glu202 coordinates Mg(2+). The active site involves Arg243. The interval 264–269 (QVAAGR) is important for the catalytic mechanism of dephosphorylation.

Belongs to the HPrK/P family. In terms of assembly, homohexamer. Requires Mg(2+) as cofactor.

The enzyme catalyses [HPr protein]-L-serine + ATP = [HPr protein]-O-phospho-L-serine + ADP + H(+). It carries out the reaction [HPr protein]-O-phospho-L-serine + phosphate + H(+) = [HPr protein]-L-serine + diphosphate. In terms of biological role, catalyzes the ATP- as well as the pyrophosphate-dependent phosphorylation of a specific serine residue in HPr, a phosphocarrier protein of the phosphoenolpyruvate-dependent sugar phosphotransferase system (PTS). HprK/P also catalyzes the pyrophosphate-producing, inorganic phosphate-dependent dephosphorylation (phosphorolysis) of seryl-phosphorylated HPr (P-Ser-HPr). The protein is HPr kinase/phosphorylase of Bordetella pertussis (strain Tohama I / ATCC BAA-589 / NCTC 13251).